The chain runs to 227 residues: tRNA (guanine-N(7)-)-methyltransferase (227 aa).

The segment at 1-21 (MPDMTMKSQPDRLYGRQRGHA) is disordered. Residues Glu54, Glu79, Asp114, and Asp136 each contribute to the S-adenosyl-L-methionine site. Asp136 is a catalytic residue. Residues Lys140, Asp172, and 206 to 209 (TRYE) contribute to the substrate site.

It belongs to the class I-like SAM-binding methyltransferase superfamily. TrmB family.

It carries out the reaction guanosine(46) in tRNA + S-adenosyl-L-methionine = N(7)-methylguanosine(46) in tRNA + S-adenosyl-L-homocysteine. The protein operates within tRNA modification; N(7)-methylguanine-tRNA biosynthesis. Its function is as follows. Catalyzes the formation of N(7)-methylguanine at position 46 (m7G46) in tRNA. The sequence is that of tRNA (guanine-N(7)-)-methyltransferase from Granulibacter bethesdensis (strain ATCC BAA-1260 / CGDNIH1).